Consider the following 245-residue polypeptide: Probable phosphatase ECA2529 (245 aa).

The Zn(2+) site is built by histidine 7, histidine 9, histidine 15, histidine 40, glutamate 73, histidine 101, histidine 131, aspartate 192, and histidine 194.

Belongs to the PHP family. In terms of assembly, homotrimer. Zn(2+) is required as a cofactor.

The chain is Probable phosphatase ECA2529 from Pectobacterium atrosepticum (strain SCRI 1043 / ATCC BAA-672) (Erwinia carotovora subsp. atroseptica).